Consider the following 453-residue polypeptide: Putative receptor-like protein kinase At2g30940 (453 aa).

A helical membrane pass occupies residues A60–F80. T155 is modified (phosphothreonine). The Protein kinase domain maps to F166–L428. Residues I172–V180 and K194 each bind ATP. A Phosphotyrosine modification is found at Y240. The active-site Proton acceptor is D293. S297 is modified (phosphoserine). A Phosphothreonine modification is found at T322.

The protein belongs to the protein kinase superfamily.

It is found in the cell membrane. The catalysed reaction is L-seryl-[protein] + ATP = O-phospho-L-seryl-[protein] + ADP + H(+). It carries out the reaction L-threonyl-[protein] + ATP = O-phospho-L-threonyl-[protein] + ADP + H(+). In Arabidopsis thaliana (Mouse-ear cress), this protein is Putative receptor-like protein kinase At2g30940.